A 448-amino-acid polypeptide reads, in one-letter code: Putative F-box/LRR-repeat protein At5g25860 (448 aa).

Residues 11–58 form the F-box domain; that stretch reads RDAVNCLPDEILAKILSYLPTKRAVSTSLISKRWRNLFALMIQLFESQ. LRR repeat units follow at residues 82-106, 185-214, 215-240, 310-341, and 342-367; these read QESF…SILC, FLHA…FLHD, LRGY…TVHF, TLSL…YFES, and NEKE…VLKG.

This is Putative F-box/LRR-repeat protein At5g25860 from Arabidopsis thaliana (Mouse-ear cress).